The following is a 479-amino-acid chain: 6-phosphogluconate dehydrogenase, decarboxylating (479 aa).

Residues 9-14 (GLGVMG), 32-34 (NRT), 77-79 (VQA), and N105 each bind NADP(+). Residues N105 and 131–133 (SGG) each bind substrate. K186 (proton acceptor) is an active-site residue. 189–190 (HN) serves as a coordination point for substrate. The Proton donor role is filled by E193. Substrate contacts are provided by Y194, K263, R290, R454, and H460.

The protein belongs to the 6-phosphogluconate dehydrogenase family. In terms of assembly, homodimer.

It carries out the reaction 6-phospho-D-gluconate + NADP(+) = D-ribulose 5-phosphate + CO2 + NADPH. The protein operates within carbohydrate degradation; pentose phosphate pathway; D-ribulose 5-phosphate from D-glucose 6-phosphate (oxidative stage): step 3/3. Catalyzes the oxidative decarboxylation of 6-phosphogluconate to ribulose 5-phosphate and CO(2), with concomitant reduction of NADP to NADPH. The protein is 6-phosphogluconate dehydrogenase, decarboxylating (GND) of Trypanosoma brucei brucei.